Consider the following 446-residue polypeptide: Adenylosuccinate synthetase (446 aa).

GTP-binding positions include Gly-20–Lys-26 and Gly-48–Thr-50. The active-site Proton acceptor is the Asp-21. Mg(2+)-binding residues include Asp-21 and Gly-48. IMP is bound by residues Asp-21 to Lys-24, Asn-46 to His-49, Thr-137, Arg-151, Gln-232, Thr-247, and Arg-319. Residue His-49 is the Proton donor of the active site. Substrate is bound at residue Ser-315–Arg-321. Residues Arg-321, Lys-347–Asp-349, and Ser-429–Gly-431 each bind GTP.

This sequence belongs to the adenylosuccinate synthetase family. Homodimer. Mg(2+) is required as a cofactor.

The protein localises to the cytoplasm. It catalyses the reaction IMP + L-aspartate + GTP = N(6)-(1,2-dicarboxyethyl)-AMP + GDP + phosphate + 2 H(+). It functions in the pathway purine metabolism; AMP biosynthesis via de novo pathway; AMP from IMP: step 1/2. Functionally, plays an important role in the de novo pathway of purine nucleotide biosynthesis. Catalyzes the first committed step in the biosynthesis of AMP from IMP. The chain is Adenylosuccinate synthetase from Ralstonia nicotianae (strain ATCC BAA-1114 / GMI1000) (Ralstonia solanacearum).